The chain runs to 419 residues: NF-kappa-B essential modulator (419 aa).

The interval 1–46 (MSRTPWKSQPCEMVQPSGGPAGDQDVLGEESSLGKPTMLHLPSEQG) is disordered. The tract at residues 1-197 (MSRTPWKSQP…REALQQQHSV (197 aa)) is required for interaction with and ubiquitination by MARCHF2. S31, S43, S68, and S85 each carry phosphoserine. Positions 44 to 111 (EQGAPETFQR…RLVERLSLEK (68 aa)) are interaction with CHUK/IKBKB. A coiled-coil region spans residues 100–353 (ARRLVERLSL…KTSCQESARI (254 aa)). Residues K111, K139, K143, K226, K246, and K264 each participate in a glycyl lysine isopeptide (Lys-Gly) (interchain with G-Cter in ubiquitin) cross-link. The interaction with TANK stretch occupies residues 150–257 (LGELQESQSR…SVVSSERNRG (108 aa)). The ubiquitin-binding (UBAN) stretch occupies residues 242 to 350 (DNHIKSSVVS…SRLKTSCQES (109 aa)). A self-association region spans residues 246 to 365 (KSSVVSSERN…MRKRHVEVSQ (120 aa)). A required for interaction with TNFAIP3 region spans residues 251–419 (SSERNRGLQL…LQIHVMECIE (169 aa)). K277 participates in a covalent cross-link: Glycyl lysine isopeptide (Lys-Gly) (interchain with G-Cter in SUMO); alternate. K277 is covalently cross-linked (Glycyl lysine isopeptide (Lys-Gly) (interchain with G-Cter in ubiquitin); alternate). Residues K283, K285, K292, and K302 each participate in a glycyl lysine isopeptide (Lys-Gly) (interchain with G-Cter in ubiquitin) cross-link. Residue K309 forms a Glycyl lysine isopeptide (Lys-Gly) (interchain with G-Cter in SUMO); alternate linkage. A Glycyl lysine isopeptide (Lys-Gly) (interchain with G-Cter in ubiquitin); alternate cross-link involves residue K309. Residues 322–343 (LAERKELLQEQLEQLQREYSRL) are leucine-zipper. A Glycyl lysine isopeptide (Lys-Gly) (interchain with G-Cter in ubiquitin) cross-link involves residue K326. The interval 363–394 (VSQPTLPPAPAHHSFHPALPSQRRSPPEEPPN) is disordered. Phosphoserine occurs at positions 376 and 387. The tract at residues 382–419 (PSQRRSPPEEPPNFCCPKCQYQAPDMDTLQIHVMECIE) is interaction with CYLD. The CCHC NOA-type zinc finger occupies 389 to 419 (PEEPPNFCCPKCQYQAPDMDTLQIHVMECIE). C397 contributes to the Zn(2+) binding site. A Glycyl lysine isopeptide (Lys-Gly) (interchain with G-Cter in ubiquitin) cross-link involves residue K399. Zn(2+)-binding residues include C400, H413, and C417.

As to quaternary structure, homodimer; disulfide-linked. Component of the I-kappa-B-kinase (IKK) core complex consisting of CHUK, IKBKB and IKBKG; probably four alpha/CHUK-beta/IKBKB dimers are associated with four gamma/IKBKG subunits. The IKK core complex seems to associate with regulatory or adapter proteins to form a IKK-signalosome holo-complex. The IKK complex associates with TERF2IP/RAP1, leading to promote IKK-mediated phosphorylation of RELA/p65. Part of a complex composed of NCOA2, NCOA3, CHUK/IKKA, IKBKB, IKBKG and CREBBP. Interacts with COPS3, CYLD, NALP2, TRPC4AP and PIDD1. Interacts with ATM; the complex is exported from the nucleus. Interacts with TRAF6. Interacts with IKBKE. Interacts with TANK; the interaction is enhanced by IKBKE and TBK1. Part of a ternary complex consisting of TANK, IKBKB and IKBKG. Interacts with ZFAND5. Interacts with RIPK2. Interacts with TNIP1 and TNFAIP3; TNIP1 facilitates the TNFAIP3-mediated de-ubiquitination of IKBKG. Interacts with TNFAIP3; the interaction is induced by TNF stimulation and by polyubiquitin. Binds (via UBAN region) polyubiquitin; binds both 'Lys-63'-linked and linear polyubiquitin, with higher affinity for linear ubiquitin. Interacts with NLRP10. Interacts with TANK; this interaction increases in response to DNA damage. Interacts with USP10; this interaction increases in response to DNA damage. Interacts with ZC3H12A; this interaction increases in response to DNA damage. Interacts with IFIT5; the interaction synergizes the recruitment of IKK to MAP3K7 and enhances IKK phosphorylation. Interacts with TRIM29; this interaction induces IKBKG/NEMO ubiquitination and proteolytic degradation. Interacts with TRIM13; this interaction leads to IKBKG/NEMO ubiquitination. Interacts with ARFIP2. Interacts with RIPK1. Interacts with (ubiquitinated) BCL10; interaction with polyubiquitinated BCL10 via both 'Lys-63'-linked and linear ubiquitin is required for TCR-induced NF-kappa-B activation. Interacts with MARCHF2; during the late stages of macrophage viral and bacterial infection; the interaction leads to ubiquitination and degradation of IKBKG/NEMO. Post-translationally, phosphorylation at Ser-68 attenuates aminoterminal homodimerization. In terms of processing, polyubiquitinated on Lys-285 via 'Lys-63'-linked ubiquitin; the ubiquitination is mediated downstream of NOD2 and RIPK2 and probably plays a role in signaling by facilitating interactions with ubiquitin domain-containing proteins and activates the NF-kappa-B pathway. Polyubiquitinated on Lys-285 and Lys-399 through 'Lys-63'-linked ubiquitin; the ubiquitination is mediated by BCL10, MALT1 and TRAF6 and probably plays a role in signaling by facilitating interactions with ubiquitin domain-containing proteins and activates the NF-kappa-B pathway. Monoubiquitinated on Lys-277 and Lys-309; promotes nuclear export. Polyubiquitinated through 'Lys-27' by TRIM23; involved in antiviral innate and inflammatory responses. Linear polyubiquitinated on Lys-111, Lys-143, Lys-226, Lys-246, Lys-264, Lys-277, Lys-285, Lys-292, Lys-302, Lys-309 and Lys-326; the head-to-tail polyubiquitination is mediated by the LUBAC complex and plays a key role in NF-kappa-B activation. Deubiquitinated by USP10 in a TANK-dependent and -independent manner, leading to the negative regulation of NF-kappa-B signaling upon DNA damage. Ubiquitinated at Lys-326 by MARCHF2 following bacterial and viral infection which leads to its degradation. Sumoylated on Lys-277 and Lys-309 with SUMO1; the modification results in phosphorylation of Ser-85 by ATM leading to a replacement of the sumoylation by mono-ubiquitination on these residues. Post-translationally, neddylated by TRIM40, resulting in stabilization of NFKBIA and down-regulation of NF-kappa-B activity. In terms of processing, (Microbial infection) Cleaved by porcine reproductive and respiratory syndrome virus serine protease nsp4 after Glu-349. The cleavage inhibits NEMO proper function.

The protein resides in the cytoplasm. It localises to the nucleus. Its function is as follows. Regulatory subunit of the IKK core complex which phosphorylates inhibitors of NF-kappa-B thus leading to the dissociation of the inhibitor/NF-kappa-B complex and ultimately the degradation of the inhibitor. Its binding to scaffolding polyubiquitin plays a key role in IKK activation by multiple signaling receptor pathways. Can recognize and bind both 'Lys-63'-linked and linear polyubiquitin upon cell stimulation, with a much highr affinity for linear polyubiquitin. Could be implicated in NF-kappa-B-mediated protection from cytokine toxicity. Essential for viral activation of IRF3. Involved in TLR3- and IFIH1-mediated antiviral innate response; this function requires 'Lys-27'-linked polyubiquitination. The polypeptide is NF-kappa-B essential modulator (IKBKG) (Sus scrofa (Pig)).